The sequence spans 1630 residues: Transient receptor potential cation channel subfamily M member 1 (1630 aa).

Disordered stretches follow at residues 1–25 (MGSM…GSQK), 65–92 (PLPS…SVSK), 453–492 (APPV…EVEE), 620–643 (LGME…EEEI), and 824–858 (SKEN…HKKQ). Topologically, residues 1–877 (MGSMRKMSSS…CEFYNAPIVK (877 aa)) are cytoplasmic. Over residues 8–25 (SSSFKRGSIKSSTSGSQK) the composition is skewed to low complexity. Positions 69–92 (VTPSSTAEDTKQGDAQSGKWSVSK) are enriched in polar residues. Residues 474–485 (GRGKGKGKKKGK) are compositionally biased toward basic residues. 2 stretches are compositionally biased toward basic and acidic residues: residues 825 to 834 (KENEDGKEKE) and 845 to 855 (GSRKGDEENEH). The helical transmembrane segment at 878 to 898 (FWFYTISYLGYLLLFNYVILV) threads the bilayer. Residues 899-944 (RMDGWPSPQEWIVISYIVSLALEKIREILMSEPGKLSQKIKVWLQE) lie on the Extracellular side of the membrane. Residues 945-965 (YWNITDLVAISMFMVGAILRL) form a helical membrane-spanning segment. The Cytoplasmic portion of the chain corresponds to 966–975 (QNQPYMGYGR). The chain crosses the membrane as a helical span at residues 976–996 (VIYCVDIILWYIRVLDIFGVN). At 997 to 1008 (KYLGPYVMMIGK) the chain is on the extracellular side. A helical membrane pass occupies residues 1009–1029 (MMIDMLYFVVIMLVVLMSFGV). The Cytoplasmic portion of the chain corresponds to 1030–1107 (ARQAILHPEE…CIPGAWLTPA (78 aa)). A helical membrane pass occupies residues 1108 to 1128 (LMACYLLVANILLVNLLIAVF). Asn1129 is a glycosylation site (N-linked (GlcNAc...) asparagine). At 1129–1158 (NNTFFEVKSISNQVWKFQRYQLIMTFHDRP) the chain is on the extracellular side. A helical membrane pass occupies residues 1159–1179 (VLPPPMIILSHIYIIVMRLSG). Over 1180–1630 (RCRKKREGDQ…QEKGNPETEC (451 aa)) the chain is Cytoplasmic. Residues 1235 to 1255 (IRVTSERVENMSMRLEEINER) adopt a coiled-coil conformation. 2 disordered regions span residues 1362 to 1414 (EDVK…AGEL) and 1575 to 1630 (CLRS…ETEC).

The protein belongs to the transient receptor (TC 1.A.4) family. LTrpC subfamily. TRPM1 sub-subfamily. In terms of assembly, interacts with TRPM3; the interaction results in the formation of a heteromultimeric cation channel complex that are functionally different from the homomeric channels. Interacts with GPR179. Associates with both guanine nucleotide-binding proteins G(o) and beta-gamma G protein dimer; implicated in directly regulating TRPM1 channel open-state.

Its subcellular location is the cell membrane. The protein localises to the endoplasmic reticulum membrane. The protein resides in the cell projection. It localises to the axon. It catalyses the reaction Ca(2+)(in) = Ca(2+)(out). The catalysed reaction is Mg(2+)(in) = Mg(2+)(out). It carries out the reaction Mn(2+)(in) = Mn(2+)(out). The enzyme catalyses Ni(2+)(in) = Ni(2+)(out). Inhibited by extracellular zinc ions. Inhibited by intracellular Mg(2+). Activated by the neuroactive steroid pregnenolone sulfate. Negatively regulated by activation of GRM6 receptors in the ON-bipolar cells. Its function is as follows. Constitutively open nonselective divalent cation-conducting channels which mediate the influx of Ca(2+), Mg(2+), Mn(2+), Ba(2+), and Ni(2+) into the cytoplasm, leading to membrane depolarization. Impermeable to zinc ions. In addition, forms heteromultimeric ion channels with TRPM3 which are permeable for calcium and zinc ions. Plays an essential role for the depolarizing photoresponse of retinal ON bipolar cells. In the dark, tonic release of glutamate activates the G-protein coupled receptor for glutamate GRM6, its activation induces the release of G(o) protein and the beta-gamma G protein dimer. Both subunits can interact and inactivate the TRPM1 channel. A light onset, induces decrease in glutamate release and deactivation of GRM6 leading to channel opening and membrane depolarization. May play a role in metastasis suppression. The chain is Transient receptor potential cation channel subfamily M member 1 from Rattus norvegicus (Rat).